The chain runs to 603 residues: Proline--tRNA ligase (603 aa).

The protein belongs to the class-II aminoacyl-tRNA synthetase family. ProS type 1 subfamily. In terms of assembly, homodimer.

The protein resides in the cytoplasm. It catalyses the reaction tRNA(Pro) + L-proline + ATP = L-prolyl-tRNA(Pro) + AMP + diphosphate. In terms of biological role, catalyzes the attachment of proline to tRNA(Pro) in a two-step reaction: proline is first activated by ATP to form Pro-AMP and then transferred to the acceptor end of tRNA(Pro). As ProRS can inadvertently accommodate and process non-cognate amino acids such as alanine and cysteine, to avoid such errors it has two additional distinct editing activities against alanine. One activity is designated as 'pretransfer' editing and involves the tRNA(Pro)-independent hydrolysis of activated Ala-AMP. The other activity is designated 'posttransfer' editing and involves deacylation of mischarged Ala-tRNA(Pro). The misacylated Cys-tRNA(Pro) is not edited by ProRS. This Arthrobacter sp. (strain FB24) protein is Proline--tRNA ligase.